Reading from the N-terminus, the 905-residue chain is uncharacterized protein (905 aa).

WD repeat units follow at residues 42–82, 86–128, 136–175, and 177–217; these read RSLK…FQAV, GYAR…SDPK, STLDGVSSVCYKKDTPLLLTGSTSRSVHIIDTRQQLDSVS, and VNTQ…SDNY. Phosphoserine occurs at positions 394 and 397.

The protein belongs to the WD repeat mio family.

This is an uncharacterized protein from Schizosaccharomyces pombe (strain 972 / ATCC 24843) (Fission yeast).